We begin with the raw amino-acid sequence, 458 residues long: Bifunctional protein GlmU (458 aa).

The interval 1 to 229 (MNKFAIVLAA…FDESLGVNDR (229 aa)) is pyrophosphorylase. UDP-N-acetyl-alpha-D-glucosamine contacts are provided by residues 8–11 (LAAG), Lys-22, Gln-72, and 77–78 (GT). Asp-102 provides a ligand contact to Mg(2+). Residues Gly-139, Glu-154, Asn-169, and Asn-227 each contribute to the UDP-N-acetyl-alpha-D-glucosamine site. Asn-227 contacts Mg(2+). The interval 230–250 (VALSQAELTMRKRINHQHMVN) is linker. An N-acetyltransferase region spans residues 251–458 (GVTLIDPATT…AKKMPHYRGQ (208 aa)). The UDP-N-acetyl-alpha-D-glucosamine site is built by Arg-332 and Lys-350. His-362 serves as the catalytic Proton acceptor. 2 residues coordinate UDP-N-acetyl-alpha-D-glucosamine: Tyr-365 and Asn-376. Residues Ala-379, Ser-404, Ala-422, and Arg-439 each coordinate acetyl-CoA.

In the N-terminal section; belongs to the N-acetylglucosamine-1-phosphate uridyltransferase family. This sequence in the C-terminal section; belongs to the transferase hexapeptide repeat family. In terms of assembly, homotrimer. Requires Mg(2+) as cofactor.

It localises to the cytoplasm. The catalysed reaction is alpha-D-glucosamine 1-phosphate + acetyl-CoA = N-acetyl-alpha-D-glucosamine 1-phosphate + CoA + H(+). It catalyses the reaction N-acetyl-alpha-D-glucosamine 1-phosphate + UTP + H(+) = UDP-N-acetyl-alpha-D-glucosamine + diphosphate. It functions in the pathway nucleotide-sugar biosynthesis; UDP-N-acetyl-alpha-D-glucosamine biosynthesis; N-acetyl-alpha-D-glucosamine 1-phosphate from alpha-D-glucosamine 6-phosphate (route II): step 2/2. Its pathway is nucleotide-sugar biosynthesis; UDP-N-acetyl-alpha-D-glucosamine biosynthesis; UDP-N-acetyl-alpha-D-glucosamine from N-acetyl-alpha-D-glucosamine 1-phosphate: step 1/1. The protein operates within bacterial outer membrane biogenesis; LPS lipid A biosynthesis. Its function is as follows. Catalyzes the last two sequential reactions in the de novo biosynthetic pathway for UDP-N-acetylglucosamine (UDP-GlcNAc). The C-terminal domain catalyzes the transfer of acetyl group from acetyl coenzyme A to glucosamine-1-phosphate (GlcN-1-P) to produce N-acetylglucosamine-1-phosphate (GlcNAc-1-P), which is converted into UDP-GlcNAc by the transfer of uridine 5-monophosphate (from uridine 5-triphosphate), a reaction catalyzed by the N-terminal domain. The chain is Bifunctional protein GlmU from Lactococcus lactis subsp. lactis (strain IL1403) (Streptococcus lactis).